The sequence spans 238 residues: Histone H1 (238 aa).

Composition is skewed to low complexity over residues 21–34 (AAVD…AKAP) and 123–132 (AKAPAAVKPK). Disordered regions lie at residues 21-57 (AAVD…AHPS) and 123-238 (AKAP…KAKK). The 71-residue stretch at 54-124 (AHPSYAEMVS…KVKGSYKLAK (71 aa)) folds into the H15 domain. Residues 133–197 (TATKKKPAAK…AAKPKAKAAA (65 aa)) show a composition bias toward basic residues. Composition is skewed to low complexity over residues 198–208 (KKAPAAATPKK) and 217–230 (KRAT…PAKK).

The protein belongs to the histone H1/H5 family.

The protein localises to the nucleus. Its subcellular location is the chromosome. Histones H1 are necessary for the condensation of nucleosome chains into higher-order structures. This is Histone H1 from Triticum aestivum (Wheat).